Consider the following 1378-residue polypeptide: DNA-directed RNA polymerase subunit beta' (1378 aa).

Positions 69, 71, 84, and 87 each coordinate Zn(2+). Residues aspartate 460, aspartate 462, and aspartate 464 each coordinate Mg(2+). Zn(2+) contacts are provided by cysteine 808, cysteine 882, cysteine 889, and cysteine 892.

This sequence belongs to the RNA polymerase beta' chain family. As to quaternary structure, the RNAP catalytic core consists of 2 alpha, 1 beta, 1 beta' and 1 omega subunit. When a sigma factor is associated with the core the holoenzyme is formed, which can initiate transcription. It depends on Mg(2+) as a cofactor. Requires Zn(2+) as cofactor.

It carries out the reaction RNA(n) + a ribonucleoside 5'-triphosphate = RNA(n+1) + diphosphate. In terms of biological role, DNA-dependent RNA polymerase catalyzes the transcription of DNA into RNA using the four ribonucleoside triphosphates as substrates. This Rickettsia canadensis (strain McKiel) protein is DNA-directed RNA polymerase subunit beta'.